The chain runs to 514 residues: MSVSKKPMVLVILDGYGYREEQQDNAIFSAKTPVMDALWANRPHTLIDASGLEVGLPDRQMGNSEVGHVNLGAGRIVYQDLTRLDVEIKDRAFFANPVLTGAVDKAKNAGKAVHIMGLLSAGGVHSHEDHIMAMVELAAERGAEKIYLHAFLDGRDTPPRSAESSLKKFEEKFAALGKGRVASIIGRYYAMDRDNRWDRVEKAYDLLTLAQGEFQADTTVAGLQAAYARDENDEFVKATVIRAEGQPDAAMEDGDALIFMNFRADRAREITRAFVNADFDGFARKKVVNVDFVMLTEYAADIKTAVAYPPASLVNTFGEWMAKNDKTQLRISETEKYAHVTFFFNGGVEESFKGEDRILINSPKVATYDLQPEMSSAELTEKLVAAIKSGKYDTIICNYPNGDMVGHTGVMEAAVKAVEALDHCVEEVAKAVESVGGQLLITADHGNAEQMRDPATGQAHTAHTNLPVPLIYVGDKNVKAVEGGKLSDIAPTMLSLMGMEIPQEMTGKPLFIVE.

2 residues coordinate Mn(2+): Asp-14 and Ser-64. The Phosphoserine intermediate role is filled by Ser-64. Substrate is bound by residues His-125, 155-156, Arg-187, Arg-193, 263-266, and Lys-336; these read RD and RADR. Mn(2+) is bound by residues Asp-403, His-407, Asp-444, His-445, and His-463.

Belongs to the BPG-independent phosphoglycerate mutase family. In terms of assembly, monomer. Mn(2+) serves as cofactor.

The catalysed reaction is (2R)-2-phosphoglycerate = (2R)-3-phosphoglycerate. It participates in carbohydrate degradation; glycolysis; pyruvate from D-glyceraldehyde 3-phosphate: step 3/5. Catalyzes the interconversion of 2-phosphoglycerate and 3-phosphoglycerate. The protein is 2,3-bisphosphoglycerate-independent phosphoglycerate mutase of Escherichia coli O6:H1 (strain CFT073 / ATCC 700928 / UPEC).